The sequence spans 242 residues: MKENIKRVLPFLLVLLFAFAPLALASAPVDAPAPADAPADALPSAKVISAPADAGVIEAVELEHATVTGAHDVAVAHVADSLSHEKLMDLFWRVLNFAVLMAILIKFGAKPIANALSGRQQRVKSEVEDLEARRIVAEKEFRQFEAKLANVEKDIDSIVDKAVAQAEIEKAKILERAEQAAADIQKSAEQAIQNEIANAKRSLKNDAADQAAVMAEELIVKHLTADDQVKIVEDYLAKVGAV.

2 helical membrane-spanning segments follow: residues 8–28 (VLPF…ASAP) and 87–107 (LMDL…LIKF).

The protein belongs to the ATPase B chain family. In terms of assembly, F-type ATPases have 2 components, F(1) - the catalytic core - and F(0) - the membrane proton channel. F(1) has five subunits: alpha(3), beta(3), gamma(1), delta(1), epsilon(1). F(0) has three main subunits: a(1), b(2) and c(10-14). The alpha and beta chains form an alternating ring which encloses part of the gamma chain. F(1) is attached to F(0) by a central stalk formed by the gamma and epsilon chains, while a peripheral stalk is formed by the delta and b chains.

The protein localises to the cell inner membrane. F(1)F(0) ATP synthase produces ATP from ADP in the presence of a proton or sodium gradient. F-type ATPases consist of two structural domains, F(1) containing the extramembraneous catalytic core and F(0) containing the membrane proton channel, linked together by a central stalk and a peripheral stalk. During catalysis, ATP synthesis in the catalytic domain of F(1) is coupled via a rotary mechanism of the central stalk subunits to proton translocation. In terms of biological role, component of the F(0) channel, it forms part of the peripheral stalk, linking F(1) to F(0). The polypeptide is ATP synthase subunit b (Desulfotalea psychrophila (strain LSv54 / DSM 12343)).